Reading from the N-terminus, the 233-residue chain is MQNQKNQKSLVAKVLVLFAAVALMFVGVQVFADDKLDLNTLECKDALELTAADAADAEKVVKQWKVQNTSLNAKVTKDSVKVAVADNKVTVTPADGDAGKALSGSKILNLVGVCELNKLTLGTEKKLTLTVKDGKVDAEAGLKALKEAGAKVPATVNKDDVTFTVGKDDNANKVTVKAVDGKTTVSGQVVFEFTVAKTPWYKTVWFLTLVAVVVVAAVAGGVFFFVKKNKKNK.

The signal sequence occupies residues Met-1–Ala-32. The chain crosses the membrane as a helical span at residues Phe-206–Val-226.

The protein resides in the cell membrane. The sequence is that of Antigenic membrane protein (amp) from Onion yellows phytoplasma (strain OY-M).